Reading from the N-terminus, the 326-residue chain is tRNA uridine(34) hydroxylase (326 aa).

The Rhodanese domain occupies 123–217 (SDPDVILVDT…YLEEVKQEES (95 aa)). Cysteine 177 functions as the Cysteine persulfide intermediate in the catalytic mechanism.

The protein belongs to the TrhO family.

The catalysed reaction is uridine(34) in tRNA + AH2 + O2 = 5-hydroxyuridine(34) in tRNA + A + H2O. Catalyzes oxygen-dependent 5-hydroxyuridine (ho5U) modification at position 34 in tRNAs. In Shewanella denitrificans (strain OS217 / ATCC BAA-1090 / DSM 15013), this protein is tRNA uridine(34) hydroxylase.